The sequence spans 145 residues: Bacilliredoxin SAR1441 (145 aa).

This sequence belongs to the bacilliredoxin family.

This Staphylococcus aureus (strain MRSA252) protein is Bacilliredoxin SAR1441.